The chain runs to 362 residues: Methylthioribose-1-phosphate isomerase (362 aa).

Aspartate 252 functions as the Proton donor in the catalytic mechanism.

Belongs to the eIF-2B alpha/beta/delta subunits family. MtnA subfamily.

It localises to the cytoplasm. Its subcellular location is the nucleus. The catalysed reaction is 5-(methylsulfanyl)-alpha-D-ribose 1-phosphate = 5-(methylsulfanyl)-D-ribulose 1-phosphate. Its pathway is amino-acid biosynthesis; L-methionine biosynthesis via salvage pathway; L-methionine from S-methyl-5-thio-alpha-D-ribose 1-phosphate: step 1/6. Catalyzes the interconversion of methylthioribose-1-phosphate (MTR-1-P) into methylthioribulose-1-phosphate (MTRu-1-P). The polypeptide is Methylthioribose-1-phosphate isomerase (Drosophila mojavensis (Fruit fly)).